The chain runs to 296 residues: MAEHLASIFGTEKDRVNCPFYFKIGACRHGDRCSRLHNRPTISPTLLLSNMYQRPDMITPGVDAQGQPLDPRKIQEHFEDFFEDLFEELGKFGEIESLNICDNLADHMIGNVYVQFKEEDQAAAALQALQGRFYSGRPIIADFSPVTDFREATCRQYEENNCNRGGYCNFMHVKLVSRELRRKLFGRYRRSYRRGSRSRSRSRSISPRNKRDNDRRDPSHREFSHRDRDREFYRHGSGKRSSERSERQERDGSRGRRQASPKRGGSPGGGREGSEERRARIEQWNREREEKEEGGA.

A C3H1-type 1 zinc finger spans residues 12-40 (EKDRVNCPFYFKIGACRHGDRCSRLHNRP). The 103-residue stretch at 44–146 (PTLLLSNMYQ…RPIIADFSPV (103 aa)) folds into the RRM domain. The C3H1-type 2 zinc-finger motif lies at 148-175 (DFREATCRQYEENNCNRGGYCNFMHVKL). Basic residues predominate over residues 191-202 (SYRRGSRSRSRS). The segment at 191–296 (SYRRGSRSRS…EREEKEEGGA (106 aa)) is disordered. 2 stretches are compositionally biased toward basic and acidic residues: residues 209–254 (NKRD…DGSR) and 272–296 (EGSE…EGGA).

This sequence belongs to the splicing factor SR family. As to quaternary structure, component of the spliceosome. Homo- and heterodimer. Interacts with U2AF35B, RNU1 and SR45.

It localises to the nucleus speckle. In terms of biological role, necessary for the splicing of pre-mRNA. Probably active at the 3' splice sites. The sequence is that of Splicing factor U2af small subunit A from Arabidopsis thaliana (Mouse-ear cress).